The primary structure comprises 311 residues: Bifunctional protein FolD (311 aa).

174–176 (GKG) provides a ligand contact to NADP(+).

This sequence belongs to the tetrahydrofolate dehydrogenase/cyclohydrolase family. Homodimer.

It carries out the reaction (6R)-5,10-methylene-5,6,7,8-tetrahydrofolate + NADP(+) = (6R)-5,10-methenyltetrahydrofolate + NADPH. It catalyses the reaction (6R)-5,10-methenyltetrahydrofolate + H2O = (6R)-10-formyltetrahydrofolate + H(+). It participates in one-carbon metabolism; tetrahydrofolate interconversion. Catalyzes the oxidation of 5,10-methylenetetrahydrofolate to 5,10-methenyltetrahydrofolate and then the hydrolysis of 5,10-methenyltetrahydrofolate to 10-formyltetrahydrofolate. This is Bifunctional protein FolD from Pyrobaculum arsenaticum (strain DSM 13514 / JCM 11321 / PZ6).